A 490-amino-acid polypeptide reads, in one-letter code: Acetyl-coenzyme A carboxylase carboxyl transferase subunit beta, chloroplastic (490 aa).

The tract at residues Leu-184–Leu-203 is disordered. The CoA carboxyltransferase N-terminal domain maps to Leu-221–Lys-490. Positions 225, 228, 244, and 247 each coordinate Zn(2+). The C4-type zinc-finger motif lies at Cys-225–Cys-247.

The protein belongs to the AccD/PCCB family. As to quaternary structure, acetyl-CoA carboxylase is a heterohexamer composed of biotin carboxyl carrier protein, biotin carboxylase and 2 subunits each of ACCase subunit alpha and ACCase plastid-coded subunit beta (accD). It depends on Zn(2+) as a cofactor. RNA expressed in leaf, root, stem, and tuber; the least expression occurs in stems. RNA persists even in senescent leaves.

Its subcellular location is the plastid. It localises to the chloroplast stroma. The catalysed reaction is N(6)-carboxybiotinyl-L-lysyl-[protein] + acetyl-CoA = N(6)-biotinyl-L-lysyl-[protein] + malonyl-CoA. It functions in the pathway lipid metabolism; malonyl-CoA biosynthesis; malonyl-CoA from acetyl-CoA: step 1/1. Its function is as follows. Component of the acetyl coenzyme A carboxylase (ACC) complex. Biotin carboxylase (BC) catalyzes the carboxylation of biotin on its carrier protein (BCCP) and then the CO(2) group is transferred by the transcarboxylase to acetyl-CoA to form malonyl-CoA. This Solanum tuberosum (Potato) protein is Acetyl-coenzyme A carboxylase carboxyl transferase subunit beta, chloroplastic.